The primary structure comprises 424 residues: Serine hydroxymethyltransferase (424 aa).

Residues Leu-118 and Gly-122–Leu-124 each bind (6S)-5,6,7,8-tetrahydrofolate. Lys-227 is modified (N6-(pyridoxal phosphate)lysine). Residues Glu-243 and Ser-351–Phe-353 contribute to the (6S)-5,6,7,8-tetrahydrofolate site.

The protein belongs to the SHMT family. As to quaternary structure, homodimer. Pyridoxal 5'-phosphate serves as cofactor.

Its subcellular location is the cytoplasm. It catalyses the reaction (6R)-5,10-methylene-5,6,7,8-tetrahydrofolate + glycine + H2O = (6S)-5,6,7,8-tetrahydrofolate + L-serine. It functions in the pathway one-carbon metabolism; tetrahydrofolate interconversion. Its pathway is amino-acid biosynthesis; glycine biosynthesis; glycine from L-serine: step 1/1. Catalyzes the reversible interconversion of serine and glycine with tetrahydrofolate (THF) serving as the one-carbon carrier. This reaction serves as the major source of one-carbon groups required for the biosynthesis of purines, thymidylate, methionine, and other important biomolecules. Also exhibits THF-independent aldolase activity toward beta-hydroxyamino acids, producing glycine and aldehydes, via a retro-aldol mechanism. In Thermosipho africanus (strain TCF52B), this protein is Serine hydroxymethyltransferase.